The chain runs to 392 residues: Potassium/proton antiporter CemA (392 aa).

Helical transmembrane passes span 174 to 194 (FLAS…VWWL), 269 to 289 (SLAN…MLSL), 316 to 336 (FLIL…WEVI), and 352 to 372 (FIFM…KYWI).

This sequence belongs to the CemA family.

It localises to the plastid. Its subcellular location is the chloroplast inner membrane. It catalyses the reaction K(+)(in) + H(+)(out) = K(+)(out) + H(+)(in). Contributes to K(+)/H(+) antiport activity by supporting proton efflux to control proton extrusion and homeostasis in chloroplasts in a light-dependent manner to modulate photosynthesis. Prevents excessive induction of non-photochemical quenching (NPQ) under continuous-light conditions. Indirectly promotes efficient inorganic carbon uptake into chloroplasts. This is Potassium/proton antiporter CemA from Nephroselmis olivacea (Green alga).